A 175-amino-acid polypeptide reads, in one-letter code: Protein GrpE (175 aa).

Residues 1–35 are disordered; sequence MSEQKQEIENENAQNSENLQDDLQDNEKNETNELQ. A compositionally biased stretch (basic and acidic residues) spans 25–35; the sequence is DNEKNETNELQ.

Belongs to the GrpE family. Homodimer.

It localises to the cytoplasm. Participates actively in the response to hyperosmotic and heat shock by preventing the aggregation of stress-denatured proteins, in association with DnaK and GrpE. It is the nucleotide exchange factor for DnaK and may function as a thermosensor. Unfolded proteins bind initially to DnaJ; upon interaction with the DnaJ-bound protein, DnaK hydrolyzes its bound ATP, resulting in the formation of a stable complex. GrpE releases ADP from DnaK; ATP binding to DnaK triggers the release of the substrate protein, thus completing the reaction cycle. Several rounds of ATP-dependent interactions between DnaJ, DnaK and GrpE are required for fully efficient folding. The protein is Protein GrpE of Campylobacter jejuni (strain RM1221).